A 334-amino-acid chain; its full sequence is 6-phosphogluconolactonase (334 aa).

It belongs to the cycloisomerase 2 family.

It catalyses the reaction 6-phospho-D-glucono-1,5-lactone + H2O = 6-phospho-D-gluconate + H(+). The protein operates within carbohydrate degradation; pentose phosphate pathway; D-ribulose 5-phosphate from D-glucose 6-phosphate (oxidative stage): step 2/3. Its function is as follows. Catalyzes the hydrolysis of 6-phosphogluconolactone to 6-phosphogluconate. The chain is 6-phosphogluconolactonase from Buchnera aphidicola subsp. Acyrthosiphon pisum (strain APS) (Acyrthosiphon pisum symbiotic bacterium).